Consider the following 279-residue polypeptide: Protein PHOTOPERIODIC CONTROL OF HYPOCOTYL 1-LIKE (279 aa).

In terms of assembly, interacts with light-activated phyB. Binds directly to PIF1 and COP1. In terms of processing, ubiquitinated by COP1 in darkness; this leads to proteasomal degradation. As to expression, mainly expressed in cotyledons, hypocotyls, leaves.

The protein resides in the nucleus. In terms of biological role, together with PCH1, regulates growth and development adaptation to the ambient environment by controlling negatively phytochrome B (phyB) dark reversion, a temperature-dependent thermal relaxation process during which phyB reverts from the active to the inactive state. Contributes to red (R) light-triggered photomorphogenesis. Promotes various light responses such as seed germination, hypocotyl gravitropism and chlorophyll biosynthesis, via direct interaction with PIF1 and COP1. Prevents DNA-binding ability of PIF1 to negatively regulate the expressions of its target genes. Facilitates the physical interaction between phyB and PIF1 and the subsequent light-induced degradation of PIF1. This chain is Protein PHOTOPERIODIC CONTROL OF HYPOCOTYL 1-LIKE, found in Arabidopsis thaliana (Mouse-ear cress).